Consider the following 1184-residue polypeptide: Probable phospholipid-transporting ATPase 12 (1184 aa).

Over 1–75 the chain is Cytoplasmic; the sequence is MATVSGRRRK…TTKYTLATFL (75 aa). The helical transmembrane segment at 76–97 threads the bilayer; the sequence is PKSLFEQFRRVANFYFLVVGIL. The Extracellular segment spans residues 98–101; that stretch reads SFTP. The helical transmembrane segment at 102–124 threads the bilayer; it reads LAPYTAVSAIVPLTFVILATMFK. Topologically, residues 125–306 are cytoplasmic; the sequence is EGVEDWRRKQ…SMIERKMDKI (182 aa). Residues 307-328 form a helical membrane-spanning segment; it reads IYLMFLMVFSLAFFGSVLFGIW. Topologically, residues 329-364 are extracellular; it reads TRDDFQNGVMERWYLKPDDSSIFFDPKRAPMAAIYH. The chain crosses the membrane as a helical span at residues 365 to 382; the sequence is FLTALMLNSYFIPISLYV. The Cytoplasmic segment spans residues 383–921; that stretch reads SIEIVKVLQS…HGHWCYRRIS (539 aa). The active-site 4-aspartylphosphate intermediate is the Asp430. Mg(2+) is bound by residues Asp866 and Asp870. A helical transmembrane segment spans residues 922 to 941; the sequence is KMICYFFYKNITFGFTLFLY. Topologically, residues 942-955 are extracellular; the sequence is EAYTSFSATPAYND. Residues 956–975 form a helical membrane-spanning segment; the sequence is WYLSLYSVFFTSLPVICLGI. The Cytoplasmic portion of the chain corresponds to 976–1005; it reads FDQDVSAPFCLKFPVLYQEGVQNLLFSWRR. A helical transmembrane segment spans residues 1006–1028; it reads ILSWMFHGFCSAIIIFFLCKTSL. Residues 1029–1041 lie on the Extracellular side of the membrane; that stretch reads ESQAFNHEGKTAG. The helical transmembrane segment at 1042–1064 threads the bilayer; the sequence is RDILGGTMYTCVVWVVSLQMVLT. The Cytoplasmic portion of the chain corresponds to 1065 to 1070; the sequence is ISYFTL. A helical membrane pass occupies residues 1071 to 1091; that stretch reads IQHVVVWGSVVIWYLFLMVYG. Topologically, residues 1092–1108 are extracellular; that stretch reads SLPIRMSTDAYMVFLEA. A helical transmembrane segment spans residues 1109-1133; sequence LAPAPSYWITTLFVVLSTMMPYFIF. Residues 1134–1184 lie on the Cytoplasmic side of the membrane; the sequence is SAIQMRFFPMSHGTVQLLRYEDQCSNSGNFEMGRQGSVRPTLVMRSHQPES.

The protein belongs to the cation transport ATPase (P-type) (TC 3.A.3) family. Type IV subfamily.

It is found in the membrane. The enzyme catalyses ATP + H2O + phospholipidSide 1 = ADP + phosphate + phospholipidSide 2.. In terms of biological role, involved in transport of phospholipids. In Arabidopsis thaliana (Mouse-ear cress), this protein is Probable phospholipid-transporting ATPase 12.